The chain runs to 119 residues: Aspartate 1-decarboxylase (119 aa).

The active-site Schiff-base intermediate with substrate; via pyruvic acid is Ser-25. Ser-25 is modified (pyruvic acid (Ser)). Thr-57 lines the substrate pocket. The Proton donor role is filled by Tyr-58. 73–75 (GAA) provides a ligand contact to substrate.

It belongs to the PanD family. Heterooctamer of four alpha and four beta subunits. The cofactor is pyruvate. Is synthesized initially as an inactive proenzyme, which is activated by self-cleavage at a specific serine bond to produce a beta-subunit with a hydroxyl group at its C-terminus and an alpha-subunit with a pyruvoyl group at its N-terminus.

It localises to the cytoplasm. It catalyses the reaction L-aspartate + H(+) = beta-alanine + CO2. It participates in cofactor biosynthesis; (R)-pantothenate biosynthesis; beta-alanine from L-aspartate: step 1/1. Functionally, catalyzes the pyruvoyl-dependent decarboxylation of aspartate to produce beta-alanine. This Thermosipho melanesiensis (strain DSM 12029 / CIP 104789 / BI429) protein is Aspartate 1-decarboxylase.